A 217-amino-acid chain; its full sequence is Claudin-9 (217 aa).

Residues 1–12 (MASTGLELLGMT) are Cytoplasmic-facing. Residues 13–33 (LAVLGWLGTLVSCALPLWKVT) traverse the membrane as a helical segment. Residues 34–81 (AFIGNSIVVAQVVWEGLWMSCVVQSTGQMQCKVYDSLLALPQDLQAAR) are Extracellular-facing. The chain crosses the membrane as a helical span at residues 82–102 (ALCVVALLLALLGLLVAITGA). Over 103-116 (QCTTCVEDEGAKAR) the chain is Cytoplasmic. Residues 117–137 (IVLTAGVLLLLSGILVLIPVC) form a helical membrane-spanning segment. Residues 138–159 (WTAHAIIQDFYNPLVAEALKRE) are Extracellular-facing. Residues 160–180 (LGASLYLGWAAAALLMLGGGL) form a helical membrane-spanning segment. The Cytoplasmic portion of the chain corresponds to 181-217 (LCCTCPPSHFERPRGPRLGYSIPSRSGASGLDKRDYV).

This sequence belongs to the claudin family. As to quaternary structure, interacts with CLDN1, CD81 and OCLN.

It is found in the cell junction. The protein resides in the tight junction. It localises to the cell membrane. Plays a major role in tight junction-specific obliteration of the intercellular space, through calcium-independent cell-adhesion activity. The sequence is that of Claudin-9 (Cldn9) from Mus musculus (Mouse).